Here is a 165-residue protein sequence, read N- to C-terminus: Yapsin-5 (165 aa).

An N-terminal signal peptide occupies residues M1–A24. N-linked (GlcNAc...) asparagine glycosylation occurs at N57. The 99-residue stretch at Y67–Y165 folds into the Peptidase A1 domain.

It belongs to the peptidase A1 family.

This is Yapsin-5 (YPS5) from Saccharomyces cerevisiae (strain ATCC 204508 / S288c) (Baker's yeast).